The primary structure comprises 302 residues: Sulfate adenylyltransferase subunit 2 (302 aa).

Belongs to the PAPS reductase family. CysD subfamily. In terms of assembly, heterodimer composed of CysD, the smaller subunit, and CysN.

The catalysed reaction is sulfate + ATP + H(+) = adenosine 5'-phosphosulfate + diphosphate. Its pathway is sulfur metabolism; hydrogen sulfide biosynthesis; sulfite from sulfate: step 1/3. In terms of biological role, with CysN forms the ATP sulfurylase (ATPS) that catalyzes the adenylation of sulfate producing adenosine 5'-phosphosulfate (APS) and diphosphate, the first enzymatic step in sulfur assimilation pathway. APS synthesis involves the formation of a high-energy phosphoric-sulfuric acid anhydride bond driven by GTP hydrolysis by CysN coupled to ATP hydrolysis by CysD. The sequence is that of Sulfate adenylyltransferase subunit 2 from Salmonella schwarzengrund (strain CVM19633).